Consider the following 500-residue polypeptide: NAD(P)H-quinone oxidoreductase chain 4, chloroplastic (500 aa).

14 helical membrane-spanning segments follow: residues 4–24 (FPWL…LFFL), 31–51 (LIKW…TYAF), 87–107 (IGPI…AWPV), 113–130 (LFHF…GSFS), 134–154 (LLLF…LLSM), 167–187 (FILY…GLGL), 208–228 (ALEI…SPII), 242–262 (HYST…YGLV), 272–292 (AHSI…IYAA), 305–325 (IAYS…SITD), 330–350 (GAIL…FLAG), 386–406 (LALP…GIIT), 416–436 (ILIT…SLSM), and 462–482 (LFVS…PDFV).

It belongs to the complex I subunit 4 family.

The protein resides in the plastid. The protein localises to the chloroplast thylakoid membrane. It carries out the reaction a plastoquinone + NADH + (n+1) H(+)(in) = a plastoquinol + NAD(+) + n H(+)(out). The catalysed reaction is a plastoquinone + NADPH + (n+1) H(+)(in) = a plastoquinol + NADP(+) + n H(+)(out). This Gossypium barbadense (Sea Island cotton) protein is NAD(P)H-quinone oxidoreductase chain 4, chloroplastic.